Consider the following 238-residue polypeptide: ATP synthase subunit a (238 aa).

The next 4 helical transmembrane spans lie at 17–37 (LSNILMITVTCVIVLLIAIIC), 80–100 (ITLLMFIFVANMLGLPFQIAI), 112–132 (DPIVTLTLAIMVLGLTHYYGI), and 194–214 (IFVGVLAIIPALLWQGFSIFI).

This sequence belongs to the ATPase A chain family. In terms of assembly, F-type ATPases have 2 components, CF(1) - the catalytic core - and CF(0) - the membrane proton channel. CF(1) has five subunits: alpha(3), beta(3), gamma(1), delta(1), epsilon(1). CF(0) has three main subunits: a(1), b(2) and c(9-12). The alpha and beta chains form an alternating ring which encloses part of the gamma chain. CF(1) is attached to CF(0) by a central stalk formed by the gamma and epsilon chains, while a peripheral stalk is formed by the delta and b chains.

It localises to the cell membrane. Functionally, key component of the proton channel; it plays a direct role in the translocation of protons across the membrane. The chain is ATP synthase subunit a from Listeria welshimeri serovar 6b (strain ATCC 35897 / DSM 20650 / CCUG 15529 / CIP 8149 / NCTC 11857 / SLCC 5334 / V8).